Consider the following 97-residue polypeptide: HssA/B-like protein 48 (97 aa).

2 disordered regions span residues 1 to 20 (MTLF…SKSS) and 78 to 97 (GSGY…CCGI).

It belongs to the hssA/B family.

This Dictyostelium discoideum (Social amoeba) protein is HssA/B-like protein 48 (hssl48).